Here is a 766-residue protein sequence, read N- to C-terminus: Protein transport protein Sec23B (766 aa).

At Ala-2 the chain carries N-acetylalanine. The Zn(2+) site is built by Cys-61, Cys-66, Cys-85, and Cys-88. N6-acetyllysine is present on Lys-564. A Gelsolin-like repeat occupies 633-719 (PEPVLLDSSS…EHGGSQARFL (87 aa)).

The protein belongs to the SEC23/SEC24 family. SEC23 subfamily. In terms of assembly, COPII is composed of at least five proteins: the Sec23/24 complex, the Sec13/31 complex and Sar1. Interacts with SAR1A.

It localises to the cytoplasmic vesicle. Its subcellular location is the COPII-coated vesicle membrane. It is found in the endoplasmic reticulum membrane. The protein resides in the cytoplasm. The protein localises to the cytosol. Its function is as follows. Component of the coat protein complex II (COPII) which promotes the formation of transport vesicles from the endoplasmic reticulum (ER). The coat has two main functions, the physical deformation of the endoplasmic reticulum membrane into vesicles and the selection of cargo molecules for their transport to the Golgi complex. This is Protein transport protein Sec23B from Pongo abelii (Sumatran orangutan).